Here is a 561-residue protein sequence, read N- to C-terminus: FAD-binding monooxygenase tazF (561 aa).

Residues 74–77 (TWLD), 86–87 (DI), and Y92 contribute to the FAD site. 84–86 (GCD) contacts NADP(+). Residues 212–218 (NGSSALQ) and 235–236 (RH) contribute to the NADP(+) site.

This sequence belongs to the FAD-binding monooxygenase family. FAD is required as a cofactor.

It participates in secondary metabolite biosynthesis. In terms of biological role, FAD-binding monooxygenase; part of the gene cluster that mediates the biosynthesis of azaterrilone A and other azaphilones, a class of fungal metabolites characterized by a highly oxygenated pyrano-quinone bicyclic core and exhibiting a broad range of bioactivities. The first step of the pathway begins with the non-reducing polyketide synthase tazA that assembles one acetyl-CoA starter unit, five malonyl-CoA units, and catalyzes a series of Claisen condensations, methylation, PT-mediated cyclization, and finally releases the first hexaketide precursor through the R-domain. The tazA product then undergoes reduction on its terminal ketone and the following pyran-ring formation by yet undetermined enzyme(s). Dehydration and enoyl reduction, possibly involving the trans-enoyl reductase tazE leads to the next intermediate. TazD is predicted as an acetyltransferase and might catalyze the acetylation steps leading to the synthesis of azaterrilone A. Azaterrilone A is not the final product of the taz pathway and both the highly reducing polyketide synthase tazB and the dual enzyme tazHJ catalyze late steps of the pathway, leading to the production of the 2 final stereoisomers that contain additional polyketide modification whose structures have still to be determined. This Aspergillus terreus (strain NIH 2624 / FGSC A1156) protein is FAD-binding monooxygenase tazF.